Reading from the N-terminus, the 265-residue chain is uncharacterized protein (265 aa).

Residues 1-21 (MAFNNSTIIIIIVIAFAFFLI) traverse the membrane as a helical segment. N-linked (GlcNAc...) asparagine; by host glycans are attached at residues Asn74 and Asn142.

It localises to the host membrane. The protein localises to the virion. This is an uncharacterized protein from Acanthamoeba polyphaga mimivirus (APMV).